A 555-amino-acid polypeptide reads, in one-letter code: Formate--tetrahydrofolate ligase (555 aa).

64–71 (TPAGEGKT) is a binding site for ATP.

Belongs to the formate--tetrahydrofolate ligase family.

The enzyme catalyses (6S)-5,6,7,8-tetrahydrofolate + formate + ATP = (6R)-10-formyltetrahydrofolate + ADP + phosphate. It participates in one-carbon metabolism; tetrahydrofolate interconversion. The polypeptide is Formate--tetrahydrofolate ligase (Allorhizobium ampelinum (strain ATCC BAA-846 / DSM 112012 / S4) (Agrobacterium vitis (strain S4))).